The chain runs to 171 residues: uncharacterized protein (171 aa).

Disordered stretches follow at residues 1–50 and 71–91; these read MSHR…THLS and RIDK…PMMK.

This is an uncharacterized protein from Caenorhabditis elegans.